Consider the following 365-residue polypeptide: TD and POZ domain-containing protein 3 (365 aa).

The region spanning 19 to 149 (KFCYNWTISN…EDQFTICCKV (131 aa)) is the MATH domain. The 63-residue stretch at 188–250 (TDCCLLVAGH…EMMGFIYTGK (63 aa)) folds into the BTB domain.

This sequence belongs to the Tdpoz family.

In Mus musculus (Mouse), this protein is TD and POZ domain-containing protein 3.